A 411-amino-acid polypeptide reads, in one-letter code: Diaminobutyrate--2-oxoglutarate transaminase (411 aa).

Lysine 262 is modified (N6-(pyridoxal phosphate)lysine).

This sequence belongs to the class-III pyridoxal-phosphate-dependent aminotransferase family. The cofactor is pyridoxal 5'-phosphate.

The enzyme catalyses L-2,4-diaminobutanoate + 2-oxoglutarate = L-aspartate 4-semialdehyde + L-glutamate. Its pathway is amine and polyamine biosynthesis; ectoine biosynthesis; L-ectoine from L-aspartate 4-semialdehyde: step 1/3. Catalyzes reversively the conversion of L-aspartate beta-semialdehyde (ASA) to L-2,4-diaminobutyrate (DABA) by transamination with L-glutamate. This is Diaminobutyrate--2-oxoglutarate transaminase (ectB) from Vibrio cholerae serotype O1 (strain ATCC 39315 / El Tor Inaba N16961).